The chain runs to 551 residues: CTP synthase (551 aa).

Residues 1–273 form an amidoligase domain region; the sequence is MKNTTNTKRT…DSKILELLNI (273 aa). Ser21 contributes to the CTP binding site. Ser21 lines the UTP pocket. ATP contacts are provided by residues 22–27 and Asp79; that span reads SLGKGL. The Mg(2+) site is built by Asp79 and Glu147. CTP-binding positions include 154-156, 194-199, and Lys230; these read DIE and KTKPTQ. Residues 194-199 and Lys230 contribute to the UTP site; that span reads KTKPTQ. In terms of domain architecture, Glutamine amidotransferase type-1 spans 298 to 551; it reads TIAITGKYVD…ISAAVANKKG (254 aa). Gly360 lines the L-glutamine pocket. Cys387 functions as the Nucleophile; for glutamine hydrolysis in the catalytic mechanism. L-glutamine-binding positions include 388 to 391, Glu411, and Arg479; that span reads LGMQ. Catalysis depends on residues His524 and Glu526.

The protein belongs to the CTP synthase family. Homotetramer.

It carries out the reaction UTP + L-glutamine + ATP + H2O = CTP + L-glutamate + ADP + phosphate + 2 H(+). The enzyme catalyses L-glutamine + H2O = L-glutamate + NH4(+). The catalysed reaction is UTP + NH4(+) + ATP = CTP + ADP + phosphate + 2 H(+). It functions in the pathway pyrimidine metabolism; CTP biosynthesis via de novo pathway; CTP from UDP: step 2/2. With respect to regulation, allosterically activated by GTP, when glutamine is the substrate; GTP has no effect on the reaction when ammonia is the substrate. The allosteric effector GTP functions by stabilizing the protein conformation that binds the tetrahedral intermediate(s) formed during glutamine hydrolysis. Inhibited by the product CTP, via allosteric rather than competitive inhibition. Catalyzes the ATP-dependent amination of UTP to CTP with either L-glutamine or ammonia as the source of nitrogen. Regulates intracellular CTP levels through interactions with the four ribonucleotide triphosphates. The protein is CTP synthase of Desulfotalea psychrophila (strain LSv54 / DSM 12343).